The chain runs to 207 residues: Small ribosomal subunit protein uS4 (207 aa).

Residues 31 to 53 (KAKFDSKPGQHGRTSGTRTSDFG) form a disordered region. Over residues 42 to 52 (GRTSGTRTSDF) the composition is skewed to polar residues. Residues 97 to 158 (SRLDNVVYRM…KSKKQTRVTE (62 aa)) enclose the S4 RNA-binding domain.

It belongs to the universal ribosomal protein uS4 family. As to quaternary structure, part of the 30S ribosomal subunit. Contacts protein S5. The interaction surface between S4 and S5 is involved in control of translational fidelity.

Its function is as follows. One of the primary rRNA binding proteins, it binds directly to 16S rRNA where it nucleates assembly of the body of the 30S subunit. In terms of biological role, with S5 and S12 plays an important role in translational accuracy. The protein is Small ribosomal subunit protein uS4 of Polaromonas sp. (strain JS666 / ATCC BAA-500).